A 447-amino-acid chain; its full sequence is MDEEYDVIVLGTGLTECILSGIMSVNGKKVLHMDRNPYYGGESSSITPLEELYKRFQLLEGPPESMGRGRDWNVDLIPKFLMANGQLVKMLLYTEVTRYLDFKVVEGSFVYKGGKIYKVPSTETEALASNLMGMFEKRRFRKFLVFVANFDENDPKTFEGVDPQTTSMRDVYRKFDLGQDVIDFTGHALALYRTDDYLDQPCLETINRIKLYSESLARYGKSPYLYPLYGLGELPQGFARLSAIYGGTYMLNKPVDDIIMENGKVVGVKSEGEVARCKQLICDPSYIPDRVRKAGQVIRIICILSHPIKNTNDANSCQIIIPQNQVNRKSDIYVCMISYAHNVAAQGKYIAIASTTVETTDPEKEVEPALELLEPIDQKFVAISDLYEPIDDGCESQVFCSCSYDATTHFETTCNDIKDIYKRMAGTAFDFENMKRKQNDVFGEAEQ.

Belongs to the Rab GDI family. Interacts with RHOH. Interacts with the non-phosphorylated forms of RAB1A, RAB3A, RAB5A, RAB5B, RAB5C, RAB8A, RAB8B, RAB10, RAB12, RAB35, and RAB43.

The protein resides in the cytoplasm. Its subcellular location is the golgi apparatus. It is found in the trans-Golgi network. In terms of biological role, regulates the GDP/GTP exchange reaction of most Rab proteins by inhibiting the dissociation of GDP from them, and the subsequent binding of GTP to them. Promotes the dissociation of GDP-bound Rab proteins from the membrane and inhibits their activation. Promotes the dissociation of RAB1A, RAB3A, RAB5A and RAB10 from membranes. This is Rab GDP dissociation inhibitor alpha (GDI1) from Pongo pygmaeus (Bornean orangutan).